Here is a 115-residue protein sequence, read N- to C-terminus: U3-lycotoxin-Ls1a (115 aa).

Positions 1-20 (MKFVLLFGVFLVTLFSYSSA) are cleaved as a signal peptide. A propeptide spanning residues 21 to 44 (EMLDDFGQADEDELLSLIEKEEAR) is cleaved from the precursor. 4 disulfide bridges follow: C48–C63, C55–C72, C62–C87, and C74–C85.

It belongs to the neurotoxin 19 (CSTX) family. 01 subfamily. As to expression, expressed by the venom gland.

The protein resides in the secreted. The protein is U3-lycotoxin-Ls1a of Lycosa singoriensis (Wolf spider).